An 898-amino-acid chain; its full sequence is Chloride channel protein 2 (898 aa).

Ala-2 carries the N-acetylalanine modification. The Cytoplasmic portion of the chain corresponds to 2–87 (AAAAAEEGME…RCHKFLVSRV (86 aa)). The interval 16–34 (QYEQTLMYGRYTQDLGAFA) is essential for channel gating by both voltage and cell volume. The residue at position 20 (Thr-20) is a Phosphothreonine. Residues 36–49 (EEAARIRLGGPEPW) are modulates channel gating by both voltage and cell volume. 2 helical membrane-spanning segments follow: residues 88–121 (GEDW…AQQW) and 130–155 (ILLQ…TQIL). The short motif at 161-165 (GSGIP) is the Selectivity filter part_1 element. Ser-162 is a binding site for chloride. The helical intramembrane region spans 164–171 (IPEMKTIL). 2 consecutive transmembrane segments (helical) span residues 180–198 (LTLK…ALGS) and 205–223 (EGPF…SKFL). A Selectivity filter part_2 motif is present at residues 203-207 (GKEGP). 2 consecutive intramembrane regions (helical) follow at residues 239-251 (MLAA…VGCC) and 255-263 (PIGGVLFSI). A run of 5 helical transmembrane segments spans residues 275 to 295 (YWRG…LAVW), 321 to 349 (LPAF…VQVM), 358 to 377 (FLMR…ISTL), 429 to 449 (ANVF…SALA), and 457 to 480 (GAFM…MAAW). A Selectivity filter part_3 motif is present at residues 457–461 (GAFMP). Position 459 (Phe-459) interacts with chloride. The segment at residues 497–511 (GGYAVVGAAALAGAV) is an intramembrane region (helical). Residues 512–513 (TH) constitute an intramembrane region (note=Loop between two helices). The helical intramembrane region spans 514-525 (TVSTAVIVFELT). Positions 526–530 (GQIAH) form an intramembrane region, note=Loop between two helices. Residues 531 to 548 (ILPVMIAVILANAVAQSL) form a helical membrane-spanning segment. The Cytoplasmic segment spans residues 549 to 898 (QPSLYDSIIR…SPSDSDDKCQ (350 aa)). Tyr-553 lines the chloride pocket. A CBS 1 domain is found at 584 to 642 (MVRDVPHVALSCTFRDLRLALHRTKGRMLALVESPESMILLGSIERSQVVALLGAQLSP). Disordered regions lie at residues 643 to 672 (ARRR…PEAS) and 686 to 717 (AARG…TGSA). A compositionally biased stretch (polar residues) spans 705 to 717 (VTRNLGESPTGSA). Phosphoserine occurs at positions 712 and 758. A CBS 2 domain is found at 790–850 (IDPAPFQLVE…GSVTAQGVKV (61 aa)). Residues 812-813 (LL) carry the Basolateral membrane sorting motif. The disordered stretch occupies residues 856–898 (SFRDSATSSSDTETTEVHALWGPHSRHGLPREGSPSDSDDKCQ).

It belongs to the chloride channel (TC 2.A.49) family. ClC-2/CLCN2 subfamily. As to quaternary structure, homodimer. Interacts with auxiliary subunit HEPACAM. Phosphorylated. Activated by dephosphorylation. As to expression, ubiquitously expressed. Moderately expressed in aortic and coronary vascular smooth muscle cells and expressed at a low level in aortic endothelial cells. Expressed in the adrenal gland, predominantly in the zona glomerulosa. Expressed in white mater perivascular astrocytes and ependymal cells (at protein level).

The protein resides in the cell membrane. It localises to the basolateral cell membrane. It is found in the cell projection. The protein localises to the dendritic spine membrane. Its subcellular location is the axon. It carries out the reaction chloride(in) = chloride(out). The catalysed reaction is thiocyanate(in) = thiocyanate(out). It catalyses the reaction bromide(in) = bromide(out). The enzyme catalyses nitrate(in) = nitrate(out). It carries out the reaction iodide(out) = iodide(in). With respect to regulation, common gate kinetics are down-regulated by intracellular ATP. Inhibited by AK-42, a derivative of meclofenamate. Inhibited by Cd(2+). Inhibited by Zn(2+) and PKC activation. Inhibited at acidic pH. CCLN2:HEPACAM channel conductance is up-regulated upon hypo-osmolarity. In terms of biological role, voltage-gated and osmosensitive chloride channel. Forms a homodimeric channel where each subunit has its own ion conduction pathway. Conducts double-barreled currents controlled by two types of gates, two fast glutamate gates that control each subunit independently and a slow common gate that opens and shuts off both subunits simultaneously. Displays inward rectification currents activated upon membrane hyperpolarization and extracellular hypotonicity. Contributes to chloride conductance involved in neuron excitability. In hippocampal neurons, generates a significant part of resting membrane conductance and provides an additional chloride efflux pathway to prevent chloride accumulation in dendrites upon GABA receptor activation. In glia, associates with the auxiliary subunit HEPACAM/GlialCAM at astrocytic processes and myelinated fiber tracts where it may regulate transcellular chloride flux buffering extracellular chloride and potassium concentrations. Regulates aldosterone production in adrenal glands. The opening of CLCN2 channels at hyperpolarized membrane potentials in the glomerulosa causes cell membrane depolarization, activation of voltage-gated calcium channels and increased expression of aldosterone synthase, the rate-limiting enzyme for aldosterone biosynthesis. Contributes to chloride conductance in retinal pigment epithelium involved in phagocytosis of shed photoreceptor outer segments and photoreceptor renewal. Conducts chloride currents at the basolateral membrane of epithelial cells with a role in chloride reabsorption rather than secretion. Permeable to small monovalent anions with chloride &gt; thiocyanate &gt; bromide &gt; nitrate &gt; iodide ion selectivity. This is Chloride channel protein 2 from Homo sapiens (Human).